A 110-amino-acid polypeptide reads, in one-letter code: Ribonuclease P protein component 1 (110 aa).

This sequence belongs to the eukaryotic/archaeal RNase P protein component 1 family. In terms of assembly, consists of a catalytic RNA component and at least 4-5 protein subunits.

Its subcellular location is the cytoplasm. It carries out the reaction Endonucleolytic cleavage of RNA, removing 5'-extranucleotides from tRNA precursor.. In terms of biological role, part of ribonuclease P, a protein complex that generates mature tRNA molecules by cleaving their 5'-ends. The sequence is that of Ribonuclease P protein component 1 from Methanosarcina mazei (strain ATCC BAA-159 / DSM 3647 / Goe1 / Go1 / JCM 11833 / OCM 88) (Methanosarcina frisia).